Consider the following 628-residue polypeptide: Beta-galactosidase large subunit (628 aa).

The active-site Proton donor is the Glu-468. Catalysis depends on Glu-536, which acts as the Nucleophile.

The protein belongs to the glycosyl hydrolase 2 family. Heterodimer of a large (LacL) and a small subunit (LacM).

The enzyme catalyses Hydrolysis of terminal non-reducing beta-D-galactose residues in beta-D-galactosides.. Component of a beta-galactosidase. This chain is Beta-galactosidase large subunit (lacL), found in Lactobacillus acidophilus (strain ATCC 700396 / NCK56 / N2 / NCFM).